The chain runs to 176 residues: Xanthine-guanine phosphoribosyltransferase (176 aa).

5-phospho-alpha-D-ribose 1-diphosphate contacts are provided by residues 51 to 52 (RG), R88, and 111 to 119 (DDLVDSGKT). R88 contacts GMP. D112 contacts Mg(2+). 2 residues coordinate guanine: D115 and I158. 2 residues coordinate xanthine: D115 and I158. GMP-binding positions include 115–119 (DSGKT) and 157–158 (WI).

It belongs to the purine/pyrimidine phosphoribosyltransferase family. XGPT subfamily. Homotetramer. Mg(2+) serves as cofactor.

The protein resides in the cell inner membrane. The catalysed reaction is GMP + diphosphate = guanine + 5-phospho-alpha-D-ribose 1-diphosphate. It catalyses the reaction XMP + diphosphate = xanthine + 5-phospho-alpha-D-ribose 1-diphosphate. It carries out the reaction IMP + diphosphate = hypoxanthine + 5-phospho-alpha-D-ribose 1-diphosphate. It functions in the pathway purine metabolism; GMP biosynthesis via salvage pathway; GMP from guanine: step 1/1. Its pathway is purine metabolism; XMP biosynthesis via salvage pathway; XMP from xanthine: step 1/1. In terms of biological role, purine salvage pathway enzyme that catalyzes the transfer of the ribosyl-5-phosphate group from 5-phospho-alpha-D-ribose 1-diphosphate (PRPP) to the N9 position of the 6-oxopurines guanine and xanthine to form the corresponding ribonucleotides GMP (guanosine 5'-monophosphate) and XMP (xanthosine 5'-monophosphate), with the release of PPi. To a lesser extent, also acts on hypoxanthine. This Ruegeria sp. (strain TM1040) (Silicibacter sp.) protein is Xanthine-guanine phosphoribosyltransferase.